The sequence spans 273 residues: Putative phosphoenolpyruvate synthase regulatory protein (273 aa).

153–160 is a binding site for ADP; sequence GVSRCGKT.

This sequence belongs to the pyruvate, phosphate/water dikinase regulatory protein family. PSRP subfamily.

The enzyme catalyses [pyruvate, water dikinase] + ADP = [pyruvate, water dikinase]-phosphate + AMP + H(+). It catalyses the reaction [pyruvate, water dikinase]-phosphate + phosphate + H(+) = [pyruvate, water dikinase] + diphosphate. In terms of biological role, bifunctional serine/threonine kinase and phosphorylase involved in the regulation of the phosphoenolpyruvate synthase (PEPS) by catalyzing its phosphorylation/dephosphorylation. This chain is Putative phosphoenolpyruvate synthase regulatory protein, found in Pectobacterium atrosepticum (strain SCRI 1043 / ATCC BAA-672) (Erwinia carotovora subsp. atroseptica).